The following is a 772-amino-acid chain: MEDILMPEGEKVSMENFALLRVLGKGAYGKVFLVRKVGGKDHNTIYAMKVLRKTRVLTKQKTLEHTMAERQVLERLRGTPFLVNLFYAFQTDTKLHIVMEYVRGGELFTHLCSRGHFDLEAARFVIAELVVAIDSLHQRKVIYRDLKLENILLDEEGHVKLTDFGLSKLFLPGELDRANSYCGTIEYMSPEVINRPEGGYSDVVDWWSLGVISFELLTGCSPFTVDGAQNSSKDIAKRIMTKKVPFPKTMDVDARDFIGQLLEKKLEKRLGYNGVDEIKNHKFMSSIDWDAAVKRTLKPVIVPRIGHDLDTQFFSAEFTSQPPLYSPAESPLNANTLFRGYSYVSPSVIFANDNVIGEELMAEDVNALLASSSFFAKYKLDKSDAGLLGKGAFSVVRRCERVVDGAQFAVKIVSQKFASQAQREARILEMVQGHPNIVQLHDVHSDPLHFYLVMEILTGNELLERIRKLERFTESEAADIMRQLVSAVKYLHDKRIVHRDLKPENILFESIDSSARLRLVDFGFARLLPNSMEQQLKSVQVLRKMTPCFTLQYAAPEVLDVGDSQPEYNEQCDLWSLGVVLFTMLSGQVPFHARSRQESATEIMQRICRAEFSFTGDAWTNVSADAKNLITGLLTVDPKKRLSMQELTAHMWLKSSASMDTPLQTPSILPSSADETFNETLRAFLHANRDGFHLLDVAAAPLMKRRGIKRQSGDKDASGNSKNSRVTQFECLPEEQEAEMTSSTSRPSNLGMMNYREPNSGTIRETRGSDSS.

The Protein kinase 1 domain maps to phenylalanine 17–methionine 284. Residues leucine 23 to valine 31 and lysine 49 each bind ATP. Aspartate 145 serves as the catalytic Proton acceptor. Phosphoserine; by autocatalysis occurs at positions 180, 342, and 347. The AGC-kinase C-terminal domain maps to serine 285–aspartate 353. Residues lysine 382–leucine 653 enclose the Protein kinase 2 domain. ATP-binding positions include leucine 388–valine 396 and lysine 411. Residue aspartate 500 is the Proton acceptor of the active site. The disordered stretch occupies residues arginine 706 to serine 772. At serine 712 the chain carries Phosphoserine; by autocatalysis. 2 stretches are compositionally biased toward polar residues: residues serine 718–threonine 727 and glutamate 739–serine 748.

This sequence belongs to the protein kinase superfamily. AGC Ser/Thr protein kinase family. S6 kinase subfamily. The cofactor is Mg(2+).

It carries out the reaction L-seryl-[protein] + ATP = O-phospho-L-seryl-[protein] + ADP + H(+). It catalyses the reaction L-threonyl-[protein] + ATP = O-phospho-L-threonyl-[protein] + ADP + H(+). Activated by multiple phosphorylations on threonine and serine residues. Functionally, serine/threonine kinase that may play a role in mediating the mitogen- and stress-induced effects on transcription. May repress transcription via phosphorylation of 'Ser-1' of histone H2A. May phosphorylate histone H3. This Caenorhabditis elegans protein is Putative ribosomal protein S6 kinase alpha-2 (rskn-2).